Consider the following 557-residue polypeptide: Organic cation/carnitine transporter 2 (557 aa).

Over 1–20 (MRDYDEVTAFLGEWGPFQRL) the chain is Cytoplasmic. Residues 21–41 (IFFLLSASIIPNGFNGMSIVF) form a helical membrane-spanning segment. The Extracellular segment spans residues 42–142 (LAGTPEHRCL…DLVCKDDWKA (101 aa)). N-linked (GlcNAc...) asparagine glycans are attached at residues Asn-57, Asn-64, and Asn-91. A helical transmembrane segment spans residues 143 to 163 (PLTTSLFFVGVLMGSFISGQL). Topologically, residues 164–172 (SDRFGRKNV) are cytoplasmic. A helical transmembrane segment spans residues 173-193 (LFLTMGMQTGFSFLQLFSVNF). The Extracellular segment spans residues 194 to 197 (EMFT). The chain crosses the membrane as a helical span at residues 198 to 218 (VLFVLVGMGQISNYVAAFVLG). Position 218–225 (218–225 (GTEILSKS)) interacts with ATP. Topologically, residues 219–232 (TEILSKSIRIIFAT) are cytoplasmic. Residues 233-253 (LGVCIFYAFGFMVLPLFAYFI) traverse the membrane as a helical segment. Residues 254–257 (RDWR) are Extracellular-facing. A helical membrane pass occupies residues 258–278 (MLLLALTVPGVLCGALWWFIP). Over 279–341 (ESPRWLISQG…YDLVRTRNIR (63 aa)) the chain is Cytoplasmic. The chain crosses the membrane as a helical span at residues 342 to 362 (IITIMSIILWLTISVGYFGLS). The Extracellular segment spans residues 363-373 (LDTPNLHGDIY). Residues 374–394 (VNCFLLAAVEVPAYVLAWLLL) traverse the membrane as a helical segment. Residues 395–406 (QHLPRRYSISAA) lie on the Cytoplasmic side of the membrane. Residues 407 to 427 (LFLGGSVLLFIQLVPSELFYL) form a helical membrane-spanning segment. The Extracellular portion of the chain corresponds to 428 to 430 (STA). The helical transmembrane segment at 431 to 451 (LVMVGKFGITSAYSMVYVYTA) threads the bilayer. Topologically, residues 452 to 462 (ELYPTVVRNMG) are cytoplasmic. A helical transmembrane segment spans residues 463–483 (VGVSSTASRLGSILSPYFVYL). Residues 484–488 (GAYDR) lie on the Extracellular side of the membrane. Position 486 is a phosphotyrosine (Tyr-486). The chain crosses the membrane as a helical span at residues 489 to 509 (FLPYILMGSLTILTAILTLFF). Topologically, residues 510 to 557 (PESFGAPLPDTIDQMLRVKGIKQWQIQSQTRTQKDGGESPTVLKSTAF) are cytoplasmic. The tract at residues 537 to 557 (SQTRTQKDGGESPTVLKSTAF) is disordered. Ser-548 bears the Phosphoserine mark. At Thr-550 the chain carries Phosphothreonine.

The protein belongs to the major facilitator (TC 2.A.1) superfamily. Organic cation transporter (TC 2.A.1.19) family. Interacts with PDZK1. As to expression, expressed in the proximal and distal tubules and in the glomeruli in the kidney, in the myocardium, valves, and arterioles in the heart, in the labyrinthine layer of the placenta, and in the cortex, hippocampus, and cerebellum in the brain. Expressed in Sertoli cells in testis.

It localises to the cell membrane. It is found in the apical cell membrane. Its subcellular location is the basal cell membrane. It carries out the reaction (R)-carnitine(out) + Na(+)(out) = (R)-carnitine(in) + Na(+)(in). It catalyses the reaction O-acetyl-(R)-carnitine(out) + Na(+)(out) = O-acetyl-(R)-carnitine(in) + Na(+)(in). The enzyme catalyses O-propanoyl-(R)-carnitine(out) + Na(+)(out) = O-propanoyl-(R)-carnitine(in) + Na(+)(in). The catalysed reaction is glycine betaine(out) + Na(+)(out) = glycine betaine(in) + Na(+)(in). It carries out the reaction glycine betaine(out) + (R)-carnitine(in) = glycine betaine(in) + (R)-carnitine(out). It catalyses the reaction O-butanoyl-(R)-carnitine(out) + Na(+)(out) = O-butanoyl-(R)-carnitine(in) + Na(+)(in). The enzyme catalyses (S)-carnitine(out) + Na(+)(out) = (S)-carnitine(in) + Na(+)(in). The catalysed reaction is an O-acyl-(R)-carnitine(out) + Na(+)(out) = an O-acyl-(R)-carnitine(in) + Na(+)(in). It carries out the reaction L-glutamyl-L-arginyl-glycyl-L-methionyl-L-threonine(out) + Na(+)(out) = L-glutamyl-L-arginyl-glycyl-L-methionyl-L-threonine(in) + Na(+)(in). It catalyses the reaction N,N-dimethylglycine(out) + Na(+)(out) = N,N-dimethylglycine(in) + Na(+)(in). Its activity is regulated as follows. Inhibited by emetine, quinidine and verapamil. The IC(50) of emetine is 4.2 uM. Not inhibited by valproic acid. Transport of (R)-carnitine is stimulated by cholesterol in the plasma membrane. Sodium-ion dependent, high affinity carnitine transporter. Involved in the active cellular uptake of carnitine. Transports one sodium ion with one molecule of carnitine. Also transports organic cations such as tetraethylammonium (TEA) without the involvement of sodium. Also relative uptake activity ratio of carnitine to TEA is 11.3. May also contribute to regulate the transport of organic compounds in testis across the blood-testis-barrier. This Rattus norvegicus (Rat) protein is Organic cation/carnitine transporter 2 (Slc22a5).